A 502-amino-acid chain; its full sequence is Cytochrome P450 71B19 (502 aa).

The chain crosses the membrane as a helical span at residues 1-21 (MAISFLCVFLITFVSLIFFAK). Cysteine 444 lines the heme pocket.

This sequence belongs to the cytochrome P450 family. Heme serves as cofactor.

The protein localises to the membrane. The chain is Cytochrome P450 71B19 (CYP71B19) from Arabidopsis thaliana (Mouse-ear cress).